The primary structure comprises 556 residues: Glucose-6-phosphate isomerase (556 aa).

Glutamate 363 serves as the catalytic Proton donor. Catalysis depends on residues histidine 394 and lysine 522.

It belongs to the GPI family.

It is found in the cytoplasm. The enzyme catalyses alpha-D-glucose 6-phosphate = beta-D-fructose 6-phosphate. It participates in carbohydrate biosynthesis; gluconeogenesis. Its pathway is carbohydrate degradation; glycolysis; D-glyceraldehyde 3-phosphate and glycerone phosphate from D-glucose: step 2/4. Functionally, catalyzes the reversible isomerization of glucose-6-phosphate to fructose-6-phosphate. This Frankia casuarinae (strain DSM 45818 / CECT 9043 / HFP020203 / CcI3) protein is Glucose-6-phosphate isomerase.